The sequence spans 460 residues: MSHQGKIVQCIGAVIDVEFASEGIPKVYDALVMEGSELTLEVQQQLGDGVVRTIALGSSDGLRRGMMVTNTQKQISVPVGTKTLGRIMDVLGRPIDEMGEIGAESFMPIHRTAPAFDELSASTELLETGIKVIDLICPFAKGGKVGLFGGAGVGKTVNMMELIRNIAIEHSGYSVFAGVGERTREGNDFYHEMKDSNVLDKVALVYGQMNEPPGNRLRVALTGLTMAEAFRDEGRDVLFFVDNIYRYTLAGTEVSALLGRMPSAVGYQPTLAEEMGRLQERITSSKTGSITSIQAVYVPADDLTDPSPATTFGHLDATVVLSRDIASLGIYPAVDPLDSTSRQLDPLVVGEDHYNTAREVQQTLQRYKELRDIIAILGMDELSPEDKLSVSRARKIQRFLSQPFFVAEVFTGSPGKYVSLKETIKGFKGIINGEYDDIPEQAFYMVGGIEEVLEKAKSFQ.

Residue 149 to 156 (GGAGVGKT) coordinates ATP.

The protein belongs to the ATPase alpha/beta chains family. As to quaternary structure, F-type ATPases have 2 components, CF(1) - the catalytic core - and CF(0) - the membrane proton channel. CF(1) has five subunits: alpha(3), beta(3), gamma(1), delta(1), epsilon(1). CF(0) has three main subunits: a(1), b(2) and c(9-12). The alpha and beta chains form an alternating ring which encloses part of the gamma chain. CF(1) is attached to CF(0) by a central stalk formed by the gamma and epsilon chains, while a peripheral stalk is formed by the delta and b chains.

Its subcellular location is the cell inner membrane. It catalyses the reaction ATP + H2O + 4 H(+)(in) = ADP + phosphate + 5 H(+)(out). Functionally, produces ATP from ADP in the presence of a proton gradient across the membrane. The catalytic sites are hosted primarily by the beta subunits. The chain is ATP synthase subunit beta 1 from Nitrosomonas eutropha (strain DSM 101675 / C91 / Nm57).